Reading from the N-terminus, the 210-residue chain is Redox-sensing transcriptional repressor Rex (210 aa).

Positions 15-54 (LYYRIFKRFNTDGIEKASSKQIADALGIDSATVRRDFSYF) form a DNA-binding region, H-T-H motif. 89 to 94 (GCGNIG) is a binding site for NAD(+).

It belongs to the transcriptional regulatory Rex family. Homodimer.

It is found in the cytoplasm. Modulates transcription in response to changes in cellular NADH/NAD(+) redox state. The protein is Redox-sensing transcriptional repressor Rex of Streptococcus agalactiae serotype Ia (strain ATCC 27591 / A909 / CDC SS700).